Here is a 305-residue protein sequence, read N- to C-terminus: tRNA dimethylallyltransferase (305 aa).

Position 8–15 (8–15 (GPTAIGKS)) interacts with ATP. Residue 10–15 (TAIGKS) participates in substrate binding. An interaction with substrate tRNA region spans residues 33-36 (DSMA).

This sequence belongs to the IPP transferase family. As to quaternary structure, monomer. Requires Mg(2+) as cofactor.

It catalyses the reaction adenosine(37) in tRNA + dimethylallyl diphosphate = N(6)-dimethylallyladenosine(37) in tRNA + diphosphate. In terms of biological role, catalyzes the transfer of a dimethylallyl group onto the adenine at position 37 in tRNAs that read codons beginning with uridine, leading to the formation of N6-(dimethylallyl)adenosine (i(6)A). This chain is tRNA dimethylallyltransferase, found in Aquifex aeolicus (strain VF5).